Consider the following 460-residue polypeptide: Probable amino acid transporter skat-1 (460 aa).

10 helical membrane passes run 64-84, 132-152, 172-192, 194-214, 236-256, 270-290, 316-336, 362-382, 383-403, and 426-446; these read LGGLWVSFVMSFVIAGLNWYG, FVNVTILFYQLGMCSVAILFI, MILMATVSLFFILLTNMFTEM, IVSFFALVSSVFFVIGAAVIM, TITMIGMSMYAFEGQTMILPI, FGVLSTTMIICTAFMTALGFF, VNVFLMLQSLLGNSIAMYVVY, GFRVFWVLVTYLMAVLIPKLE, IMIPLVGVTSGALCALIFPPF, and IFINLVVMAIGVFAIIAGVYT.

The protein belongs to the amino acid/polyamine transporter 2 family. In terms of tissue distribution, expressed in the head, tail, body and ventral nerve cord neurons, muscles of the vulva, and intestine.

The protein localises to the membrane. The protein resides in the cytoplasmic granule. Functionally, plays a role in the accumulation of vital dyes and endogenous fluorescent compounds in lysosome related organelles. Has an effect on lysosome related organelle (LRO) function, in a pathway with serotonin. This is Probable amino acid transporter skat-1 from Caenorhabditis elegans.